The primary structure comprises 346 residues: MAHRPRWTLSQVTELFEKPLLDLLFEAQQVHRQHFDPRQVQVSTLLSIKTGACPEDCKYCPQSSRYKTGLEAERLMEVEQVLESARKAKAAGSTRFCMGAAWKNPHERDMPYLEQMVQGVKAMGLEACMTLGTLSESQAQRLANAGLDYYNHNLDTSPEFYGNIITTRTYQERLDTLEKVRDAGIKVCSGGIVGLGETVKDRAGLLLQLANLPTPPESVPINMLVKVKGTPLADNDDVDAFDFIRTIAVARIMMPTSYVRLSAGREQMNEQTQAMCFVAGANSIFYGCKLLTTPNPEEDKDLQLFRKLGLNPQQTAVLAGDNEQQQRLEQALMTPDTDEYYNAAAL.

The Radical SAM core domain occupies 38–256 (RQVQVSTLLS…IAVARIMMPT (219 aa)). Residues Cys-53, Cys-57, and Cys-60 each coordinate [4Fe-4S] cluster. The [2Fe-2S] cluster site is built by Cys-97, Cys-128, Cys-188, and Arg-260.

The protein belongs to the radical SAM superfamily. Biotin synthase family. In terms of assembly, homodimer. [4Fe-4S] cluster serves as cofactor. The cofactor is [2Fe-2S] cluster.

The enzyme catalyses (4R,5S)-dethiobiotin + (sulfur carrier)-SH + 2 reduced [2Fe-2S]-[ferredoxin] + 2 S-adenosyl-L-methionine = (sulfur carrier)-H + biotin + 2 5'-deoxyadenosine + 2 L-methionine + 2 oxidized [2Fe-2S]-[ferredoxin]. The protein operates within cofactor biosynthesis; biotin biosynthesis; biotin from 7,8-diaminononanoate: step 2/2. In terms of biological role, catalyzes the conversion of dethiobiotin (DTB) to biotin by the insertion of a sulfur atom into dethiobiotin via a radical-based mechanism. The sequence is that of Biotin synthase from Shigella dysenteriae serotype 1 (strain Sd197).